The chain runs to 130 residues: UPF0102 protein TDE_2303 (130 aa).

This sequence belongs to the UPF0102 family.

This is UPF0102 protein TDE_2303 from Treponema denticola (strain ATCC 35405 / DSM 14222 / CIP 103919 / JCM 8153 / KCTC 15104).